The following is a 543-amino-acid chain: CTP synthase (543 aa).

The interval 1–265 (MARYIFITGG…DDEVLAAFGI (265 aa)) is amidoligase domain. S13 is a binding site for CTP. S13 is a UTP binding site. Position 14–19 (14–19 (SLGKGL)) interacts with ATP. Y54 is an L-glutamine binding site. D71 contacts ATP. Mg(2+) contacts are provided by D71 and E139. Residues 146 to 148 (DIE), 186 to 191 (KTKPTQ), and K222 contribute to the CTP site. UTP-binding positions include 186 to 191 (KTKPTQ) and K222. 238–240 (RDV) is a binding site for ATP. One can recognise a Glutamine amidotransferase type-1 domain in the interval 291 to 542 (TIAIVGKYTG…IQAAMVQSRL (252 aa)). Position 353 (G353) interacts with L-glutamine. C380 acts as the Nucleophile; for glutamine hydrolysis in catalysis. L-glutamine contacts are provided by residues 381 to 384 (FGMQ), E404, and R470. Catalysis depends on residues H515 and E517.

Belongs to the CTP synthase family. Homotetramer.

It carries out the reaction UTP + L-glutamine + ATP + H2O = CTP + L-glutamate + ADP + phosphate + 2 H(+). The enzyme catalyses L-glutamine + H2O = L-glutamate + NH4(+). The catalysed reaction is UTP + NH4(+) + ATP = CTP + ADP + phosphate + 2 H(+). Its pathway is pyrimidine metabolism; CTP biosynthesis via de novo pathway; CTP from UDP: step 2/2. With respect to regulation, allosterically activated by GTP, when glutamine is the substrate; GTP has no effect on the reaction when ammonia is the substrate. The allosteric effector GTP functions by stabilizing the protein conformation that binds the tetrahedral intermediate(s) formed during glutamine hydrolysis. Inhibited by the product CTP, via allosteric rather than competitive inhibition. Catalyzes the ATP-dependent amination of UTP to CTP with either L-glutamine or ammonia as the source of nitrogen. Regulates intracellular CTP levels through interactions with the four ribonucleotide triphosphates. The polypeptide is CTP synthase (Bradyrhizobium diazoefficiens (strain JCM 10833 / BCRC 13528 / IAM 13628 / NBRC 14792 / USDA 110)).